The following is a 367-amino-acid chain: DNA polymerase IV (367 aa).

One can recognise a UmuC domain in the interval Ile-14–Gly-198. Mg(2+) is bound by residues Asp-18 and Asp-116. Glu-117 is a catalytic residue.

This sequence belongs to the DNA polymerase type-Y family. As to quaternary structure, monomer. It depends on Mg(2+) as a cofactor.

The protein localises to the cytoplasm. The catalysed reaction is DNA(n) + a 2'-deoxyribonucleoside 5'-triphosphate = DNA(n+1) + diphosphate. In terms of biological role, poorly processive, error-prone DNA polymerase involved in untargeted mutagenesis. Copies undamaged DNA at stalled replication forks, which arise in vivo from mismatched or misaligned primer ends. These misaligned primers can be extended by PolIV. Exhibits no 3'-5' exonuclease (proofreading) activity. May be involved in translesional synthesis, in conjunction with the beta clamp from PolIII. The polypeptide is DNA polymerase IV (Streptococcus thermophilus (strain ATCC BAA-491 / LMD-9)).